The primary structure comprises 848 residues: Probable serine/threonine-protein kinase DDB_G0278535 (848 aa).

Composition is skewed to low complexity over residues 1 to 52, 60 to 85, and 95 to 116; these read MNKS…NNNH, TAATTTTSTTGTGTTAATTSTSTSST, and TSNSNLATATNTPSSSPQVSTS. The disordered stretch occupies residues 1–117; it reads MNKSSSASTV…SSSPQVSTSV (117 aa). 5 ANK repeats span residues 181-212, 218-248, 252-285, 289-320, and 324-353; these read MDQTPLCAALRNGSHDIVREILFFYQSNKMDI, SGYTPLHVAASHCDDQILMLLLNYEGINVNI, DKNSALHYFCQKFRSPNCQEPFSIFLKKGVNVNA, NGETPLHKSIFNNTVRLLMVNMLLDAGAEVNV, and RGESPLHFAVRLGREDLVSVLVKAGADITI. An SAM domain is found at 378–441; it reads KNVQDIFNWL…IRNCRILRDQ (64 aa). Positions 448-478 are disordered; the sequence is NSNVTTGSGSSGSTTTTTTTTTTTSGCGGLN. The segment covering 452-472 has biased composition (low complexity); that stretch reads TTGSGSSGSTTTTTTTTTTTS. Positions 529–799 constitute a Protein kinase domain; it reads LEYTLKLGSG…TLNRLRHEYM (271 aa). ATP contacts are provided by residues 535-543 and K556; that span reads LGSGSSGKV. D650 acts as the Proton acceptor in catalysis. The tract at residues 810–848 is disordered; sequence RKLPSLSPPPQPTTTTTTTTSSSTSTNNINNNINNNNNT. A compositionally biased stretch (low complexity) spans 822–848; sequence TTTTTTTTSSSTSTNNINNNINNNNNT.

It belongs to the protein kinase superfamily. TKL Ser/Thr protein kinase family.

The enzyme catalyses L-seryl-[protein] + ATP = O-phospho-L-seryl-[protein] + ADP + H(+). It catalyses the reaction L-threonyl-[protein] + ATP = O-phospho-L-threonyl-[protein] + ADP + H(+). This chain is Probable serine/threonine-protein kinase DDB_G0278535, found in Dictyostelium discoideum (Social amoeba).